The chain runs to 313 residues: MEFKHTSVLLDECIEYLNINQEGIYVDGTIGGAGHSSEIYKRLGEKGCLVGLDQDSFAVETSIKRLDEIKSNADFKVVNTNFKNIKSACSGLGINEVDGILLDLGVSSHQLDEASRGFSYQHDAPLDMRMNTKSELSAYDVVNKYSEQDIYRIIRDFGEEKWASRIAKFITEARQNEPVETTYDLVDIIKKAVPSSARRDGPHPAKRTFQAIRIEVNNELGILNKTIEDCVDLLKRGGRLCIITFHSLEDRIVKMQYNKMVNPCTCPPAFPVCACGKKPKAVLINKKPIVSDIRELDKNPRARSAKLRVLQKI.

S-adenosyl-L-methionine-binding positions include 33–35, Asp53, Phe82, Asp103, and Gln110; that span reads AGH.

It belongs to the methyltransferase superfamily. RsmH family.

The protein localises to the cytoplasm. It carries out the reaction cytidine(1402) in 16S rRNA + S-adenosyl-L-methionine = N(4)-methylcytidine(1402) in 16S rRNA + S-adenosyl-L-homocysteine + H(+). Its function is as follows. Specifically methylates the N4 position of cytidine in position 1402 (C1402) of 16S rRNA. This is Ribosomal RNA small subunit methyltransferase H from Ruminiclostridium cellulolyticum (strain ATCC 35319 / DSM 5812 / JCM 6584 / H10) (Clostridium cellulolyticum).